Reading from the N-terminus, the 292-residue chain is Probable 2-(5''-triphosphoribosyl)-3'-dephosphocoenzyme-A synthase (292 aa).

Belongs to the CitG/MdcB family.

It carries out the reaction 3'-dephospho-CoA + ATP = 2'-(5''-triphospho-alpha-D-ribosyl)-3'-dephospho-CoA + adenine. This is Probable 2-(5''-triphosphoribosyl)-3'-dephosphocoenzyme-A synthase from Shigella flexneri serotype 5b (strain 8401).